A 133-amino-acid polypeptide reads, in one-letter code: ATP synthase epsilon chain (133 aa).

Belongs to the ATPase epsilon chain family. F-type ATPases have 2 components, CF(1) - the catalytic core - and CF(0) - the membrane proton channel. CF(1) has five subunits: alpha(3), beta(3), gamma(1), delta(1), epsilon(1). CF(0) has three main subunits: a, b and c.

Its subcellular location is the cell membrane. Functionally, produces ATP from ADP in the presence of a proton gradient across the membrane. This chain is ATP synthase epsilon chain, found in Bacillus cereus (strain ATCC 14579 / DSM 31 / CCUG 7414 / JCM 2152 / NBRC 15305 / NCIMB 9373 / NCTC 2599 / NRRL B-3711).